Consider the following 402-residue polypeptide: APO protein 3, mitochondrial (402 aa).

A mitochondrion-targeting transit peptide spans 1–13 (MQRRKLVEISIFV). Positions 37–59 (NDEDPLYADVPKPPKDKSERKPY) are disordered. Positions 48–58 (KPPKDKSERKP) are enriched in basic and acidic residues. APO domains follow at residues 127–213 (RCRL…DLEK) and 294–380 (TCGY…PVPD).

The protein belongs to the APO family.

The protein localises to the mitochondrion. Functionally, may be involved in the stable assembly of several 4Fe-4S cluster-containing complexes of mitochondria. This is APO protein 3, mitochondrial (APO3) from Arabidopsis thaliana (Mouse-ear cress).